A 395-amino-acid polypeptide reads, in one-letter code: Lipid-A-disaccharide synthase (395 aa).

The protein belongs to the LpxB family.

It carries out the reaction a lipid X + a UDP-2-N,3-O-bis[(3R)-3-hydroxyacyl]-alpha-D-glucosamine = a lipid A disaccharide + UDP + H(+). It functions in the pathway bacterial outer membrane biogenesis; LPS lipid A biosynthesis. Its function is as follows. Condensation of UDP-2,3-diacylglucosamine and 2,3-diacylglucosamine-1-phosphate to form lipid A disaccharide, a precursor of lipid A, a phosphorylated glycolipid that anchors the lipopolysaccharide to the outer membrane of the cell. This chain is Lipid-A-disaccharide synthase, found in Bordetella avium (strain 197N).